We begin with the raw amino-acid sequence, 298 residues long: Acetylglutamate kinase (298 aa).

Substrate is bound by residues 69 to 70 (GG), Arg91, and Asn191.

It belongs to the acetylglutamate kinase family. ArgB subfamily.

It localises to the cytoplasm. It catalyses the reaction N-acetyl-L-glutamate + ATP = N-acetyl-L-glutamyl 5-phosphate + ADP. It functions in the pathway amino-acid biosynthesis; L-arginine biosynthesis; N(2)-acetyl-L-ornithine from L-glutamate: step 2/4. Catalyzes the ATP-dependent phosphorylation of N-acetyl-L-glutamate. This is Acetylglutamate kinase from Neisseria meningitidis serogroup C (strain 053442).